Consider the following 522-residue polypeptide: F-box only protein 7 (522 aa).

2 disordered regions span residues Met1–Glu20 and Pro85–Val128. Residues Met1–Pro88 are ubiquitin-like. A compositionally biased stretch (polar residues) spans Leu87–Asn114. The segment at Asp92–Thr129 is important for interaction with PINK1. An important for interaction with CDK6 region spans residues Thr129–Met169. An important for dimerization and interaction with PSMF1 region spans residues Pro180–Leu324. Residues Val329–Leu375 enclose the F-box domain. An important for interaction with CDK6 region spans residues Arg381–Leu522. Omega-N-methylarginine occurs at positions 431 and 451. A disordered region spans residues Asp459–Leu522. An RFDP motif motif is present at residues Arg481–Pro484. Arg518 is subject to Asymmetric dimethylarginine.

As to quaternary structure, part of the SCF (SKP1-CUL1-F-box) E3 ubiquitin-protein ligase complex SCF(FBXO7) formed of CUL1, SKP1, RBX1 and FBXO7. Interacts via its C-terminal proline-rich region with DLGAP5. Interacts with BIRC2. Interacts with CDK6 and promotes its interaction with D-type cyclin. Interacts (via the N-terminal Ubl domain) with PRKN. Interacts (via N-terminal region) with PINK1. Interacts with PSMF1.

It is found in the cytoplasm. It localises to the nucleus. The protein localises to the mitochondrion. Its subcellular location is the cytosol. Its pathway is protein modification; protein ubiquitination. In terms of biological role, substrate recognition component of a SCF (SKP1-CUL1-F-box protein) E3 ubiquitin-protein ligase complex which mediates the ubiquitination and subsequent proteasomal degradation of target proteins and plays a role in several biological processes such as cell cycle, cell proliferation, or maintenance of chromosome stability. Recognizes and ubiquitinates BIRC2 and the cell cycle regulator DLGAP5. Plays a role downstream of PINK1 in the clearance of damaged mitochondria via selective autophagy (mitophagy) by targeting PRKN to dysfunctional depolarized mitochondria. Promotes MFN1 ubiquitination. Mediates the ubiquitination and proteasomal degradation of UXT isoform 2, thereby impairing the NF-kappa-B signaling pathway. Inhibits NF-kappa-B pathway also by promoting the ubiquitinatioin of TRAF2. Affects the assembly state and activity of the proteasome in the cells including neurons by ubiquitinating the proteasomal subunit PSMA2 via 'Lys-63'-linked polyubiquitin chains. Promotes 'Lys-48'-linked polyubiquitination SIRT7, leading to the hydrogen peroxide-induced cell death. The polypeptide is F-box only protein 7 (Fbxo7) (Rattus norvegicus (Rat)).